We begin with the raw amino-acid sequence, 197 residues long: RNA-binding protein Rsf1 (197 aa).

The region spanning 7-80 is the RRM domain; it reads TRVYVGNLTD…SQLRVEISKG (74 aa). Residues 74-197 are disordered; the sequence is RVEISKGRPR…SRSPVGNHRF (124 aa). Residues 89-102 show a composition bias toward basic and acidic residues; the sequence is GPMDRGGRRGDFGR. T106 carries the post-translational modification Phosphothreonine. Composition is skewed to low complexity over residues 117–144 and 166–176; these read QRGS…SYNG and RYSSGSSASYG. 5 positions are modified to phosphoserine: S168, S171, S174, S188, and S190.

Belongs to the splicing factor SR family. In terms of processing, extensively phosphorylated on serine residues in the RS domain.

It is found in the nucleus. In terms of biological role, may control important aspects of development. The sequence is that of RNA-binding protein Rsf1 (Rsf1) from Drosophila melanogaster (Fruit fly).